A 304-amino-acid chain; its full sequence is Neurexophilin-4 (304 aa).

Positions 1-23 are cleaved as a signal peptide; sequence MRLLPEWLLLLFGPWLLRKVISG. Positions 24–84 are II; the sequence is QIVESGRPQY…GALARPGAAG (61 aa). Residues Asn72, Asn133, Asn143, and Asn149 are each glycosylated (N-linked (GlcNAc...) asparagine). Residues 85–163 are III; the sequence is GPPVPRTKRK…IVPPSKRVEF (79 aa). The interval 164-220 is IV (linker domain); that stretch reads GGVWLPGPAPHPLQSTLALEGVLPGLGPPLGMAGQGLGGNLGGALAGPLGGALGVPG. The interval 221–304 is v (Cys-rich); it reads AKESRAFNCH…NFQSEHPYFG (84 aa).

This sequence belongs to the neurexophilin family. In terms of processing, may be proteolytically processed in neuron-like cells. As to expression, brain and kidney.

Its subcellular location is the secreted. Its function is as follows. May be signaling molecules that resemble neuropeptides and that act by binding to alpha-neurexins and possibly other receptors. This Rattus norvegicus (Rat) protein is Neurexophilin-4 (Nxph4).